Here is a 508-residue protein sequence, read N- to C-terminus: Lysine--tRNA ligase (508 aa).

Glutamate 416 and glutamate 423 together coordinate Mg(2+).

The protein belongs to the class-II aminoacyl-tRNA synthetase family. As to quaternary structure, homodimer. The cofactor is Mg(2+).

It localises to the cytoplasm. The catalysed reaction is tRNA(Lys) + L-lysine + ATP = L-lysyl-tRNA(Lys) + AMP + diphosphate. The chain is Lysine--tRNA ligase from Prochlorococcus marinus (strain MIT 9313).